The following is a 429-amino-acid chain: UDP-N-acetylglucosamine 1-carboxyvinyltransferase (429 aa).

22-23 (KN) contacts phosphoenolpyruvate. UDP-N-acetyl-alpha-D-glucosamine is bound at residue Arg-102. Cys-126 functions as the Proton donor in the catalytic mechanism. Residue Cys-126 is modified to 2-(S-cysteinyl)pyruvic acid O-phosphothioketal. UDP-N-acetyl-alpha-D-glucosamine-binding positions include 171-174 (KVSV), Asp-316, and Ile-338.

This sequence belongs to the EPSP synthase family. MurA subfamily.

Its subcellular location is the cytoplasm. It catalyses the reaction phosphoenolpyruvate + UDP-N-acetyl-alpha-D-glucosamine = UDP-N-acetyl-3-O-(1-carboxyvinyl)-alpha-D-glucosamine + phosphate. It participates in cell wall biogenesis; peptidoglycan biosynthesis. Functionally, cell wall formation. Adds enolpyruvyl to UDP-N-acetylglucosamine. The sequence is that of UDP-N-acetylglucosamine 1-carboxyvinyltransferase from Azorhizobium caulinodans (strain ATCC 43989 / DSM 5975 / JCM 20966 / LMG 6465 / NBRC 14845 / NCIMB 13405 / ORS 571).